Reading from the N-terminus, the 534-residue chain is 26S proteasome non-ATPase regulatory subunit 3 (534 aa).

A compositionally biased stretch (basic and acidic residues) spans 1–16; the sequence is MKQEGSARRRGADKAK. The interval 1 to 69 is disordered; that stretch reads MKQEGSARRR…AEHSQRELDT (69 aa). The span at 17-32 shows a compositional bias: pro residues; it reads PPPGGGEQEPPPPPAP. Residue K38 forms a Glycyl lysine isopeptide (Lys-Gly) (interchain with G-Cter in SUMO1); alternate linkage. K38 is covalently cross-linked (Glycyl lysine isopeptide (Lys-Gly) (interchain with G-Cter in SUMO2); alternate). The region spanning 286 to 465 is the PCI domain; that stretch reads ARYLYYTGRI…GYVQSKEMID (180 aa). Phosphoserine is present on residues S418 and S430. The disordered stretch occupies residues 500–534; it reads SYNKDLESAEERREREQQDLEFAKEMAEDDDDSFP. The segment covering 501-525 has biased composition (basic and acidic residues); it reads YNKDLESAEERREREQQDLEFAKEM.

The protein belongs to the proteasome subunit S3 family. Component of the 19S proteasome regulatory particle complex. The 26S proteasome consists of a 20S core particle (CP) and two 19S regulatory subunits (RP). The regulatory particle is made of a lid composed of 9 subunits including PSMD3, a base containing 6 ATPases and few additional components. Interacts with UBQLN1 (via ubiquitin-like domain). Interacts with ERCC6.

Component of the 26S proteasome, a multiprotein complex involved in the ATP-dependent degradation of ubiquitinated proteins. This complex plays a key role in the maintenance of protein homeostasis by removing misfolded or damaged proteins, which could impair cellular functions, and by removing proteins whose functions are no longer required. Therefore, the proteasome participates in numerous cellular processes, including cell cycle progression, apoptosis, or DNA damage repair. This chain is 26S proteasome non-ATPase regulatory subunit 3 (PSMD3), found in Homo sapiens (Human).